Here is a 111-residue protein sequence, read N- to C-terminus: Large ribosomal subunit protein uL24 (111 aa).

It belongs to the universal ribosomal protein uL24 family. Part of the 50S ribosomal subunit.

Functionally, one of two assembly initiator proteins, it binds directly to the 5'-end of the 23S rRNA, where it nucleates assembly of the 50S subunit. One of the proteins that surrounds the polypeptide exit tunnel on the outside of the subunit. The polypeptide is Large ribosomal subunit protein uL24 (Myxococcus xanthus (strain DK1622)).